The sequence spans 1043 residues: NACHT, LRR and PYD domains-containing protein 13 (1043 aa).

The region spanning 1 to 107 is the Pyrin domain; that stretch reads MNFSVITCPN…CEKVRAEMKE (107 aa). The 330-residue stretch at 229–558 folds into the NACHT domain; the sequence is QTIVLVGRAG…VLEEPREFPP (330 aa). An ATP-binding site is contributed by 235–242; sequence GRAGVGKT. LRR repeat units lie at residues 725-749, 781-804, 837-864, 894-917, 923-946, 951-978, and 1007-1030; these read NENL…LCLA, NSKL…ILKA, IQHV…ALTH, NRSL…FLCE, DGNL…ELAN, NHNV…ALKP, and SKSL…MLCK.

The protein belongs to the NLRP family.

Functionally, involved in inflammation. The protein is NACHT, LRR and PYD domains-containing protein 13 (NLRP13) of Homo sapiens (Human).